We begin with the raw amino-acid sequence, 1172 residues long: Short transient receptor potential channel 2 (1172 aa).

Residues methionine 1–serine 10 are compositionally biased toward basic and acidic residues. 4 disordered regions span residues methionine 1–aspartate 22, valine 69–asparagine 98, serine 140–glutamine 227, and alanine 249–valine 271. Residues methionine 1 to lysine 659 lie on the Cytoplasmic side of the membrane. The segment covering proline 75–valine 87 has biased composition (polar residues). Over residues glutamate 166–arginine 177 the composition is skewed to basic and acidic residues. A compositionally biased stretch (polar residues) spans serine 195–asparagine 204. The span at arginine 206–glutamine 218 shows a compositional bias: basic residues. Over residues serine 261 to serine 270 the composition is skewed to low complexity. ANK repeat units lie at residues lysine 301–glycine 330, glutamine 377–glycine 406, and proline 430–arginine 459. The chain crosses the membrane as a helical span at residues isoleucine 660–leucine 680. At glycine 681–glutamate 702 the chain is on the extracellular side. The helical transmembrane segment at threonine 703–isoleucine 723 threads the bilayer. Residues glutamate 724 to aspartate 738 are Cytoplasmic-facing. The helical transmembrane segment at valine 739–alanine 759 threads the bilayer. Residues tyrosine 760–glutamine 789 lie on the Extracellular side of the membrane. Residues phenylalanine 790 to isoleucine 810 traverse the membrane as a helical segment. Over leucine 811–arginine 833 the chain is Cytoplasmic. The chain crosses the membrane as a helical span at residues phenylalanine 834–valine 854. The Extracellular portion of the chain corresponds to proline 855–alanine 899. Residues methionine 900–isoleucine 920 form a helical membrane-spanning segment. Over threonine 921–serine 1172 the chain is Cytoplasmic. Residues valine 1118–serine 1172 are disordered. Residues alanine 1130 to alanine 1144 show a composition bias toward low complexity.

This sequence belongs to the transient receptor (TC 1.A.4) family. STrpC subfamily. TRPC2 sub-subfamily. Isoform 3 is ubiquitously expressed at low levels. Isoform 4 is expressed exclusively in vomeronasal organ.

The protein resides in the membrane. Functionally, thought to form a receptor-activated non-selective calcium permeant cation channel. Probably is operated by a phosphatidylinositol second messenger system activated by receptor tyrosine kinases or G-protein coupled receptors. May also be activated by intracellular calcium store depletion. Plays a role in mediating responsivity to pheromones that elicit aggressive and mating behaviors. Required for response to the Esp1 pheromone which enhances female sexual receptive behavior and to the Esp22 pheromone which inhibits adult male mating behavior. The chain is Short transient receptor potential channel 2 (Trpc2) from Mus musculus (Mouse).